We begin with the raw amino-acid sequence, 312 residues long: Malate dehydrogenase (312 aa).

NAD(+) contacts are provided by residues 7-13 (GAAGGIG) and D34. Residues R81 and R87 each coordinate substrate. NAD(+) is bound by residues N94 and 117–119 (ITN). The substrate site is built by N119 and R153. H177 (proton acceptor) is an active-site residue. M227 is a binding site for NAD(+).

The protein belongs to the LDH/MDH superfamily. MDH type 1 family. In terms of assembly, homodimer.

The catalysed reaction is (S)-malate + NAD(+) = oxaloacetate + NADH + H(+). In terms of biological role, catalyzes the reversible oxidation of malate to oxaloacetate. In Salmonella agona (strain SL483), this protein is Malate dehydrogenase.